The sequence spans 690 residues: NF-kappa-B-repressing factor (690 aa).

The segment at 1 to 296 is active repression domain; sequence MEKILQMAEG…FKHTFGEDLV (296 aa). The Nuclear localization signal motif lies at 25 to 45; that stretch reads KPSKGQKRHLSTCDGQNPPKK. Disordered stretches follow at residues 27–87 and 132–163; these read SKGQ…NEQT and MYFDSGNPAPSTTSQQANSQSTPEPSPSQTFP. A Glycyl lysine isopeptide (Lys-Gly) (interchain with G-Cter in SUMO2) cross-link involves residue Lys-68. Over residues 142 to 163 the composition is skewed to low complexity; sequence STTSQQANSQSTPEPSPSQTFP. The DNA-binding element occupies 296–388; sequence VVCQIGMSSY…RVFLQDHCLA (93 aa). Residues 414 to 431 are compositionally biased toward polar residues; that stretch reads PTYPSVKSSQCHTGSSPR. The tract at residues 414–437 is disordered; the sequence is PTYPSVKSSQCHTGSSPRGSGKKK. A Glycyl lysine isopeptide (Lys-Gly) (interchain with G-Cter in SUMO2) cross-link involves residue Lys-500. One can recognise a G-patch domain in the interval 551–596; sequence EDNIGNQLLRKMGWTGGGLGKSGEGIREPISVKEQHKREGLGLDVE. One can recognise an R3H domain in the interval 600 to 664; sequence KIAKRDIEQI…DRYLVVGRKR (65 aa). Ser-618 carries the post-translational modification Phosphoserine. Residues Lys-666 and Lys-674 each participate in a glycyl lysine isopeptide (Lys-Gly) (interchain with G-Cter in SUMO2) cross-link.

As to quaternary structure, interacts with NF-kappa-B. Interacts with XRN2. Interacts (via G-patch domain) with DHX15; promoting the RNA helicase activity of DHX15. Widely and constitutively expressed. Expressed at lower level in colon, peripheral blood lymphocytes, lung and kidney.

The protein localises to the nucleus. The protein resides in the nucleolus. Enhances the ATPase activity of DHX15 by acting like a brace that tethers mobile sections of DHX15 together, stabilizing a functional conformation with high RNA affinity of DHX15. Involved in the constitutive silencing of the interferon beta promoter, independently of the virus-induced signals, and in the inhibition of the basal and cytokine-induced iNOS promoter activity. Also involved in the regulation of IL-8 transcription. May also act as a DNA-binding transcription regulator: interacts with a specific negative regulatory element (NRE) 5'-AATTCCTCTGA-3' to mediate transcriptional repression of certain NK-kappa-B responsive genes. The protein is NF-kappa-B-repressing factor of Homo sapiens (Human).